Here is a 223-residue protein sequence, read N- to C-terminus: Putative UPF0607 protein LOC392364 (223 aa).

Residues 110–138 (KMEVRAEEPKEATEVKDQVETQEQEDNKR) are compositionally biased toward basic and acidic residues. Residues 110–223 (KMEVRAEEPK…GRTPPARQHG (114 aa)) form a disordered region. Composition is skewed to polar residues over residues 145–163 (EAAS…TSPR) and 174–186 (QLKS…QTDK).

Belongs to the UPF0607 family.

The polypeptide is Putative UPF0607 protein LOC392364 (Homo sapiens (Human)).